We begin with the raw amino-acid sequence, 453 residues long: uncharacterized protein (453 aa).

A TRAM domain is found at 5–63 (LLKKNQSIELTIEDLTHDGSGVGKIDGYPLFIPNTLPGEKVTAKIIKLNKNYGFARMEN). [4Fe-4S] cluster is bound by residues Cys-76, Cys-82, Cys-85, and Cys-162. The S-adenosyl-L-methionine site is built by Gln-285, Tyr-314, Glu-335, and Asp-383. The active-site Nucleophile is Cys-410.

This sequence belongs to the class I-like SAM-binding methyltransferase superfamily. RNA M5U methyltransferase family.

This is an uncharacterized protein from Listeria monocytogenes serotype 4b (strain F2365).